Here is a 249-residue protein sequence, read N- to C-terminus: tRNA (guanine-N(1)-)-methyltransferase (249 aa).

S-adenosyl-L-methionine-binding positions include Gly-113 and Ile-133–Leu-138.

The protein belongs to the RNA methyltransferase TrmD family. As to quaternary structure, homodimer.

The protein resides in the cytoplasm. It carries out the reaction guanosine(37) in tRNA + S-adenosyl-L-methionine = N(1)-methylguanosine(37) in tRNA + S-adenosyl-L-homocysteine + H(+). Functionally, specifically methylates guanosine-37 in various tRNAs. This chain is tRNA (guanine-N(1)-)-methyltransferase, found in Photobacterium profundum (strain SS9).